The sequence spans 844 residues: MTEDVKADAPKKLSIQRRTKTTVSSTTTGGKSKEVQVEVRKKRTVKTDIAQQEEAKLKAQQEAEAKKIAEQKAAEEKARLEAEKAATKKEADEKSKAEKAKAETAKPAKSAVDSKAKFVDPEKEKRKAEEAELRRKAEEVARQKAEEQARRAAEEAKRYAEADDSDNESSSEDYSDYNLSSRYALEAEDEEDRRNENRGRGKNKVAKAKKGGRDDENSKNSKNERESNRKNQKDAKFGKGKNGKKGTALQQAFTKPVQVVKADVVIGETITVAELANKMSVKATEIIKVMMKMGEMVTINQVIDQETAQLVAEELGHKVILRNENELEEAVLGDRDVNAEKVTRAPVVTIMGHVDHGKTSLLDYIRKAKVAAGEAGGITQHIGAYHVEMDDGKMITFLDTPGHAAFTSMRARGAKATDIVVLVVAADDGVMPQTIEAIQHAKAAGAPLVVAVNKIDKPEANPDRVEQELLQHDVISEKFGGDVQFVPVSAKKGTGVDDLLDAILLQSEVLELTAVKDGMASGVVIESYLDKGRGPVATILVQSGTLRKGDIVLCGFEYGRARAMRDENGKEVDEAGPSIPVELLGLSGVPAAGDEATVVRDEKKAREVALYRQGKFREVKLARQQKAKLENMFSNMSEGDVAELNVIVKADVQGSVEAIVQALNELSTNEVKVKVVGSGVGGITETDATLATASNAIIVGFNVRADATARRVIEAENIDLRYYSIIYELLNEIKAAMSGMLEPEFKQEIIGLAEVRDVFRHPKFGAIAGCMVTEGVVKRNNPIRVLRDNVVIFEGELESLRRFKDDVSEVRNGMECGIGVKNYNDVKVGDQIEVFEVVEVKRSI.

The segment covering 1-11 has biased composition (basic and acidic residues); that stretch reads MTEDVKADAPK. Disordered stretches follow at residues 1–48 and 79–249; these read MTED…VKTD and RLEA…GTAL. A compositionally biased stretch (low complexity) spans 21-30; that stretch reads TTVSSTTTGG. Residues 79–161 are compositionally biased toward basic and acidic residues; sequence RLEAEKAATK…AAEEAKRYAE (83 aa). Positions 162–175 are enriched in acidic residues; that stretch reads ADDSDNESSSEDYS. The span at 200-210 shows a compositional bias: basic residues; sequence RGKNKVAKAKK. Basic and acidic residues predominate over residues 211–237; that stretch reads GGRDDENSKNSKNERESNRKNQKDAKF. Positions 343 to 513 constitute a tr-type G domain; it reads TRAPVVTIMG…LLQSEVLELT (171 aa). The tract at residues 352 to 359 is G1; sequence GHVDHGKT. Residue 352–359 coordinates GTP; that stretch reads GHVDHGKT. The interval 377 to 381 is G2; sequence GITQH. The tract at residues 399–402 is G3; sequence DTPG. Residues 399–403 and 453–456 contribute to the GTP site; these read DTPGH and NKID. The G4 stretch occupies residues 453 to 456; it reads NKID. The interval 489 to 491 is G5; sequence SAK.

It belongs to the TRAFAC class translation factor GTPase superfamily. Classic translation factor GTPase family. IF-2 subfamily.

The protein resides in the cytoplasm. Its function is as follows. One of the essential components for the initiation of protein synthesis. Protects formylmethionyl-tRNA from spontaneous hydrolysis and promotes its binding to the 30S ribosomal subunits. Also involved in the hydrolysis of GTP during the formation of the 70S ribosomal complex. The chain is Translation initiation factor IF-2 from Haemophilus influenzae (strain 86-028NP).